Consider the following 99-residue polypeptide: Small ribosomal subunit protein bS6c (99 aa).

This sequence belongs to the bacterial ribosomal protein bS6 family.

It localises to the plastid. Its subcellular location is the chloroplast. Functionally, binds together with bS18 to 16S ribosomal RNA. The protein is Small ribosomal subunit protein bS6c of Cyanidioschyzon merolae (strain NIES-3377 / 10D) (Unicellular red alga).